A 234-amino-acid chain; its full sequence is Acetylxylan esterase 2 (234 aa).

A signal peptide spans 1-17; sequence MHSKFFAASLLGLGAAA. The propeptide occupies 18–27; that stretch reads IPLEGVMEKR. Disulfide bonds link cysteine 29/cysteine 106 and cysteine 73/cysteine 79. The active site involves serine 117. 3 disulfide bridges follow: cysteine 128-cysteine 188, cysteine 174-cysteine 206, and cysteine 198-cysteine 205. Residue aspartate 202 is part of the active site. N-linked (GlcNAc...) asparagine glycosylation occurs at asparagine 207. The active site involves histidine 214.

The protein belongs to the cutinase family. Acetylxylan esterase subfamily. As to quaternary structure, monomer.

The protein localises to the secreted. The catalysed reaction is Deacetylation of xylans and xylo-oligosaccharides.. The protein operates within glycan degradation; xylan degradation. In terms of biological role, degrades acetylated xylans by cleaving acetyl side groups from the hetero-xylan backbone. The chain is Acetylxylan esterase 2 (axe-2) from Talaromyces purpureogenus (Soft rot fungus).